A 258-amino-acid polypeptide reads, in one-letter code: Tropinone reductase-like 3 (258 aa).

Ile19–Val43 contacts NAD(+). Ser150 contacts substrate. The active-site Proton acceptor is Tyr163.

This sequence belongs to the short-chain dehydrogenases/reductases (SDR) family.

In terms of biological role, has no tropinone reductase activity. In Erythroxylum coca (Coca plant), this protein is Tropinone reductase-like 3.